Reading from the N-terminus, the 880-residue chain is Alanine--tRNA ligase (880 aa).

The Zn(2+) site is built by His-568, His-572, Cys-670, and His-674.

It belongs to the class-II aminoacyl-tRNA synthetase family. Requires Zn(2+) as cofactor.

It localises to the cytoplasm. It carries out the reaction tRNA(Ala) + L-alanine + ATP = L-alanyl-tRNA(Ala) + AMP + diphosphate. Functionally, catalyzes the attachment of alanine to tRNA(Ala) in a two-step reaction: alanine is first activated by ATP to form Ala-AMP and then transferred to the acceptor end of tRNA(Ala). Also edits incorrectly charged Ser-tRNA(Ala) and Gly-tRNA(Ala) via its editing domain. The chain is Alanine--tRNA ligase from Enterococcus faecalis (strain ATCC 700802 / V583).